The sequence spans 123 residues: Small ribosomal subunit protein uS12c (123 aa).

It belongs to the universal ribosomal protein uS12 family. Part of the 30S ribosomal subunit.

The protein resides in the plastid. It is found in the chloroplast. Its function is as follows. With S4 and S5 plays an important role in translational accuracy. Located at the interface of the 30S and 50S subunits. The polypeptide is Small ribosomal subunit protein uS12c (rps12) (Chara vulgaris (Common stonewort)).